A 308-amino-acid polypeptide reads, in one-letter code: RNA pseudouridylate synthase domain-containing protein 1 (308 aa).

At methionine 1 the chain carries N-acetylmethionine. Aspartate 67 is a catalytic residue. The interval 257–292 (APDPDPSEGGPGPCSPCTPLPGPGRPPPPPETEVQR) is disordered. The span at 269 to 287 (PCSPCTPLPGPGRPPPPPE) shows a compositional bias: pro residues.

It belongs to the pseudouridine synthase RluA family.

The sequence is that of RNA pseudouridylate synthase domain-containing protein 1 (RPUSD1) from Bos taurus (Bovine).